We begin with the raw amino-acid sequence, 379 residues long: D-threonine aldolase (379 aa).

K59 carries the post-translational modification N6-(pyridoxal phosphate)lysine.

Belongs to the DSD1 family. Pyridoxal 5'-phosphate serves as cofactor. Mn(2+) is required as a cofactor. It depends on Co(2+) as a cofactor. The cofactor is Ni(2+). Requires Mg(2+) as cofactor.

The enzyme catalyses D-threonine = acetaldehyde + glycine. It catalyses the reaction D-allo-threonine = acetaldehyde + glycine. With respect to regulation, inhibited by the carbonyl reagents hydroxylamine, phenylhydrazine and semicarbazide. Inhibited by the chelating agent EDTA. Inhibited by the sulfhydryl reagent p-chloromercuribenzoic acid, and by sodium cyanide. Inhibited by iodoacetate, Ag(2)SO(4), HgCl(2) and CdCl(2). Competitively inhibited by beta-hydroxyaspartate and O-phospho-DL-threonine. Functionally, catalyzes the reversible cleavage of D-threonine or D-allothreonine into glycine and acetaldehyde. Can also cleave D-beta-phenylserine, D-beta-hydroxy-alpha-aminovaleric acid, D-beta-3,4-dihydroxyphenylserine and D-beta-3,4-methylenedioxyphenylserine into glycine and the corresponding aldehyde compounds. Inactive towards D-serine, beta-hydroxyaspartate and O-phospho-DL-threonine. The polypeptide is D-threonine aldolase (Arthrobacter sp).